A 245-amino-acid polypeptide reads, in one-letter code: Uridylate kinase (245 aa).

ATP is bound at residue 15–18 (KLSG). The segment at 23 to 28 (GDEGFG) is involved in allosteric activation by GTP. Glycine 57 contacts UMP. Positions 58 and 62 each coordinate ATP. Residues aspartate 77 and 138–145 (TGNPFCTT) each bind UMP. ATP-binding residues include threonine 165, tyrosine 171, and aspartate 174.

Belongs to the UMP kinase family. As to quaternary structure, homohexamer.

It localises to the cytoplasm. It carries out the reaction UMP + ATP = UDP + ADP. It participates in pyrimidine metabolism; CTP biosynthesis via de novo pathway; UDP from UMP (UMPK route): step 1/1. Allosterically activated by GTP. Inhibited by UTP. Catalyzes the reversible phosphorylation of UMP to UDP. The chain is Uridylate kinase from Shewanella sp. (strain W3-18-1).